A 799-amino-acid polypeptide reads, in one-letter code: Protein ADP-ribosyltransferase PARP3 (799 aa).

Positions Met1 to Gly49 are enriched in basic and acidic residues. The tract at residues Met1–Ser55 is disordered. The PADR1 zinc-binding domain occupies Lys39 to Pro188. An SAP domain is found at Asn71–Leu105. The zinc ribbon stretch occupies residues Gly108–Pro152. 4 residues coordinate Zn(2+): Cys113, Cys116, Cys129, and Cys139. Residues Thr140 to Asn161 are disordered. A compositionally biased stretch (basic and acidic residues) spans Glu145–Lys154. Positions Phe189–Leu261 constitute a BRCT domain. Residues Asp309–Phe409 enclose the WGR domain. The region spanning His436–Gly555 is the PARP alpha-helical domain. A PARP catalytic domain is found at Asp564–Ile795.

Belongs to the ARTD/PARP family.

The protein localises to the nucleus. It catalyses the reaction L-aspartyl-[protein] + NAD(+) = 4-O-(ADP-D-ribosyl)-L-aspartyl-[protein] + nicotinamide. It carries out the reaction L-glutamyl-[protein] + NAD(+) = 5-O-(ADP-D-ribosyl)-L-glutamyl-[protein] + nicotinamide. Functionally, involved in the base excision repair (BER) pathway, by catalyzing the poly(ADP-ribosyl)ation of a limited number of acceptor proteins involved in chromatin architecture and in DNA metabolism. This modification follows DNA damages and appears as an obligatory step in a detection/signaling pathway leading to the reparation of DNA strand breaks. This is Protein ADP-ribosyltransferase PARP3 (PARP3) from Medicago truncatula (Barrel medic).